A 520-amino-acid polypeptide reads, in one-letter code: Cytochrome P450 72A397 (520 aa).

A helical transmembrane segment spans residues 14 to 34 (AVAVAVVVVGWAWKVLNWVWV). Cys468 contacts heme.

It belongs to the cytochrome P450 family. Requires heme as cofactor.

Its subcellular location is the membrane. The enzyme catalyses oleanolate + reduced [NADPH--hemoprotein reductase] + O2 = hederagenin + oxidized [NADPH--hemoprotein reductase] + H2O + H(+). Functionally, catalyzes the oxidation of oleanolate at the C-23 position to form hederagenin. In Kalopanax septemlobus (Castor aralia), this protein is Cytochrome P450 72A397.